The following is a 146-amino-acid chain: Large ribosomal subunit protein bL17 (146 aa).

Positions 124-134 (EASRATRAAAS) are enriched in low complexity. The segment at 124-146 (EASRATRAAASKKAEEEAASEAE) is disordered.

It belongs to the bacterial ribosomal protein bL17 family. In terms of assembly, part of the 50S ribosomal subunit. Contacts protein L32.

The protein is Large ribosomal subunit protein bL17 of Corynebacterium kroppenstedtii (strain DSM 44385 / JCM 11950 / CIP 105744 / CCUG 35717).